Here is a 130-residue protein sequence, read N- to C-terminus: MMTQIIHTEKAPAAIGPYVQAVDLGNLVLTSGQIPVNPATGEVPADIVAQARQSLENVKAIIEKAGLTAADIVKTTVFVKDLNDFAAVNAEYERFFKENNHPNFPARSCVEVARLPKDVGLEIEAIAVRK.

Cysteine 109 is a catalytic residue.

Belongs to the RutC family. As to quaternary structure, homotrimer.

The polypeptide is RutC family protein HI_0719 (Haemophilus influenzae (strain ATCC 51907 / DSM 11121 / KW20 / Rd)).